The chain runs to 446 residues: Probable 1,4-beta-D-glucan cellobiohydrolase A (446 aa).

An N-terminal signal peptide occupies residues 1-17 (MYQRALLFSALLSVSRA). An N-linked (GlcNAc...) asparagine glycan is attached at Asn-81. Glu-226 functions as the Nucleophile in the catalytic mechanism. Glu-231 acts as the Proton donor in catalysis. Asn-284 and Asn-333 each carry an N-linked (GlcNAc...) asparagine glycan. The tract at residues 399–420 (TDADPSQPGVARGTCEQGAGDP) is disordered.

Belongs to the glycosyl hydrolase 7 (cellulase C) family.

The protein resides in the secreted. It catalyses the reaction Hydrolysis of (1-&gt;4)-beta-D-glucosidic linkages in cellulose and cellotetraose, releasing cellobiose from the non-reducing ends of the chains.. In terms of biological role, the biological conversion of cellulose to glucose generally requires three types of hydrolytic enzymes: (1) Endoglucanases which cut internal beta-1,4-glucosidic bonds; (2) Exocellobiohydrolases that cut the disaccharide cellobiose from the non-reducing end of the cellulose polymer chain; (3) Beta-1,4-glucosidases which hydrolyze the cellobiose and other short cello-oligosaccharides to glucose. The sequence is that of Probable 1,4-beta-D-glucan cellobiohydrolase A (cbhA) from Emericella nidulans (strain FGSC A4 / ATCC 38163 / CBS 112.46 / NRRL 194 / M139) (Aspergillus nidulans).